Reading from the N-terminus, the 707-residue chain is DCC-interacting protein 13-alpha (707 aa).

The tract at residues 1–428 (MPGIDKLPIE…PPTARTSSSG (428 aa)) is required for RAB5A binding. A BAR domain is found at 3–268 (GIDKLPIEET…DPLYLPDPDP (266 aa)). A coiled-coil region spans residues 234–257 (QNVRREMDGDVETMQQTIEDLEVA). Residues 277–375 (LTRKAGYLNA…WICTINNISK (99 aa)) form the PH domain. 3 disordered regions span residues 397–433 (AVTP…LGSE), 466–490 (GQAK…STKS), and 636–707 (EKQK…ESEA). Residue Thr-399 is modified to Phosphothreonine. Position 401 is a phosphoserine (Ser-401). The F&amp;H signature appears at 403-414 (SFQQRHESLRPG). Ser-410 is modified (phosphoserine; by PKA). The region spanning 495–655 (SILHQLFIVR…EKQQKELSKQ (161 aa)) is the PID domain. Positions 620–670 (LAKQIALHAELDRRASEKQKEIERVKEKQQKELSKQKQIEKDLEEQSRLIA) form a coiled coil. A compositionally biased stretch (basic and acidic residues) spans 636–666 (EKQKEIERVKEKQQKELSKQKQIEKDLEEQS). Residues 679–691 (GSEGQLVLSSSQS) show a composition bias toward low complexity. Phosphoserine is present on residues Ser-691 and Ser-694. Basic and acidic residues predominate over residues 698-707 (EEGKKRESEA).

Homodimer. Binds RAB5A/Rab5 through an N-terminal domain. This interaction is essential for its recruitment to endosomal membranes as well as its role in cell proliferation. Binds DCC and the catalytic domain of the inactive form of AKT2 through its PID domain. Binds PIK3CA and subunits of the NuRD/MeCP1 complex. Interacts with OCRL and INPP5B. Interacts with NTRK2. Interacts with APPL2; interaction is independent of follicle stimulating hormone stimulation; interaction is decreased by adiponectin in a time-dependent manner. Forms a complex with APPL2 and RUVBL2. Forms a complex comprising APPL2, RUVBL2, CTNNB1, HDAC1 and HDAC2; interaction reduces interaction between CTNNB1, HDAC1, HDAC2 and RUVBL2 leading to the decrease of deacetylase activity of this complex; affects the recruitment of repressive complexes to the Wnt target genes. Interacts with ANXA2. Interacts with TGFBR1; interaction is TGF beta dependent; mediates trafficking of the TGFBR1 from the endosomes to the nucleus via microtubules in a TRAF6-dependent manner. Interacts with PRKCZ. Interacts with PIK3R1 and APPL2. Interacts with ADIPOR1; ADIPOQ enhances this interaction; inhibites adiponectin-stimulated binding of APPL2 to ADIPOR1. Post-translationally, phosphorylation at Ser-410 by PKA severely impairs binding to OCRL. As to expression, expressed in insulin-target tissues including skeletal muscle, liver, fat, and brain.

It is found in the early endosome membrane. Its subcellular location is the nucleus. It localises to the cytoplasm. The protein localises to the endosome. The protein resides in the cell projection. It is found in the ruffle. Its subcellular location is the cytoplasmic vesicle. It localises to the phagosome. In terms of biological role, multifunctional adapter protein that binds to various membrane receptors, nuclear factors and signaling proteins to regulate many processes, such as cell proliferation, immune response, endosomal trafficking and cell metabolism. Regulates signaling pathway leading to cell proliferation through interaction with RAB5A and subunits of the NuRD/MeCP1 complex. Functions as a positive regulator of innate immune response via activation of AKT1 signaling pathway by forming a complex with APPL1 and PIK3R1. Inhibits Fc-gamma receptor-mediated phagocytosis through PI3K/Akt signaling in macrophages. Regulates TLR4 signaling in activated macrophages. Involved in trafficking of the TGFBR1 from the endosomes to the nucleus via microtubules in a TRAF6-dependent manner. Plays a role in cell metabolism by regulating adiponecting and insulin signaling pathways. Required for fibroblast migration through HGF cell signaling. Positive regulator of beta-catenin/TCF-dependent transcription through direct interaction with RUVBL2/reptin resulting in the relief of RUVBL2-mediated repression of beta-catenin/TCF target genes by modulating the interactions within the beta-catenin-reptin-HDAC complex. This chain is DCC-interacting protein 13-alpha, found in Mus musculus (Mouse).